The following is a 320-amino-acid chain: Polynucleotide 5'-triphosphatase CTL1 (320 aa).

Polar residues predominate over residues 1-12 (MSDQPETPSNSR). The interval 1-23 (MSDQPETPSNSRNSHENVGAKKA) is disordered. Residues 13-23 (NSHENVGAKKA) show a composition bias toward basic and acidic residues.

Belongs to the fungal TPase family. Mg(2+) serves as cofactor. The cofactor is Mn(2+).

It is found in the cytoplasm. It localises to the nucleus. The enzyme catalyses a 5'-end triphospho-ribonucleoside in mRNA + H2O = a 5'-end diphospho-ribonucleoside in mRNA + phosphate + H(+). Functionally, probably involved in an RNA processing event other than mRNA capping. Releases gamma-phosphate from the 5'-end of RNA to produce a diphosphate terminus. This chain is Polynucleotide 5'-triphosphatase CTL1, found in Saccharomyces cerevisiae (strain ATCC 204508 / S288c) (Baker's yeast).